An 89-amino-acid polypeptide reads, in one-letter code: Cell division topological specificity factor (89 aa).

It belongs to the MinE family.

Functionally, prevents the cell division inhibition by proteins MinC and MinD at internal division sites while permitting inhibition at polar sites. This ensures cell division at the proper site by restricting the formation of a division septum at the midpoint of the long axis of the cell. The sequence is that of Cell division topological specificity factor from Yersinia pestis bv. Antiqua (strain Angola).